A 333-amino-acid polypeptide reads, in one-letter code: Glycogenin-1 (333 aa).

The residue at position 2 (threonine 2) is an N-acetylthreonine. Positions 9, 11, 12, and 15 each coordinate UDP. UDP-alpha-D-glucose contacts are provided by leucine 9, threonine 11, asparagine 12, and tyrosine 15. Residue serine 44 is modified to Phosphoserine; by PKA; in vitro. Arginine 77 lines the UDP pocket. Positions 77, 86, 102, 103, 104, 133, 134, 160, 163, and 164 each coordinate UDP-alpha-D-glucose. 3 residues coordinate UDP: aspartate 102, alanine 103, and aspartate 104. Aspartate 102 lines the Mn(2+) pocket. Aspartate 104 is a binding site for Mn(2+). A glycan (O-linked (Glc...) tyrosine) is linked at tyrosine 195. Histidine 212, glycine 215, and lysine 218 together coordinate UDP. Position 212 (histidine 212) interacts with Mn(2+). Residues glycine 215 and lysine 218 each contribute to the UDP-alpha-D-glucose site. Positions 284–316 are interaction with GYS1; that stretch reads SHLSLGETPATTQPFVSSEERKERWEQGQADYM.

This sequence belongs to the glycosyltransferase 8 family. Glycogenin subfamily. Part of the GYS1-GYG1 complex, a heterooctamer composed of a tetramer of GYS1 and 2 dimers of GYG1, where each GYS1 protomer binds to one GYG1 subunit (via GYG1 C-terminus); the GYS1 tetramer may dissociate from GYG1 dimers to continue glycogen polymerization on its own. May also form a heterooctamer complex with GYS2 (via GYG1 C-terminus). The cofactor is Mn(2+). In terms of processing, self-glycosylated by the transfer of glucose residues from UDP-glucose to itself, forming an alpha-1,4-glycan of around 10 residues attached to Tyr-195. Post-translationally, phosphorylated. Detected in heart, skeletal muscle, brain and testis, and at lower levels in kidney.

Its subcellular location is the cytoplasm. It is found in the nucleus. It carries out the reaction L-tyrosyl-[glycogenin] + UDP-alpha-D-glucose = alpha-D-glucosyl-L-tyrosyl-[glycogenin] + UDP + H(+). The enzyme catalyses [1,4-alpha-D-glucosyl](n)-L-tyrosyl-[glycogenin] + UDP-alpha-D-glucose = [1,4-alpha-D-glucosyl](n+1)-L-tyrosyl-[glycogenin] + UDP + H(+). Its pathway is glycan biosynthesis; glycogen biosynthesis. Its function is as follows. Glycogenin participates in the glycogen biosynthetic process along with glycogen synthase and glycogen branching enzyme. It catalyzes the formation of a short alpha (1,4)-glucosyl chain covalently attached via a glucose 1-O-tyrosyl linkage to internal tyrosine residues and these chains act as primers for the elongation reaction catalyzed by glycogen synthase. This is Glycogenin-1 (GYG1) from Oryctolagus cuniculus (Rabbit).